A 294-amino-acid polypeptide reads, in one-letter code: Probable 2-(5''-triphosphoribosyl)-3'-dephosphocoenzyme-A synthase (294 aa).

Belongs to the CitG/MdcB family.

The catalysed reaction is 3'-dephospho-CoA + ATP = 2'-(5''-triphospho-alpha-D-ribosyl)-3'-dephospho-CoA + adenine. This is Probable 2-(5''-triphosphoribosyl)-3'-dephosphocoenzyme-A synthase from Streptococcus pyogenes serotype M49 (strain NZ131).